Consider the following 493-residue polypeptide: Transcript termination protein OPG145 (493 aa).

A Helicase ATP-binding domain is found at 100–256; sequence MIESKRPLYI…NSIINIAKLS (157 aa). ATP is bound at residue 113–120; the sequence is LACGFGKT. Residues 206-209 carry the DESH box motif; sequence DESH. A Helicase C-terminal domain is found at 309 to 456; the sequence is ILDTLVEEFK…IISLSVDKLG (148 aa).

The protein belongs to the helicase family. Poxviruses subfamily. As to quaternary structure, interacts with OPG087. Might be part of a transcription complex composed at least of OPG087, OPG110, and OPG145.

The protein localises to the virion. DNA helicase which seems to act as a postreplicative transcription termination factor. Involved in ATP-dependent release of nascent RNA. Forms a stable complex with single-stranded DNA, and to a lesser extent RNA. This is Transcript termination protein OPG145 (OPG145) from Homo sapiens (Human).